The primary structure comprises 189 residues: MSSLEISNSCFSPETRSPSSRQSVEDNASEPSGKDVDDVQEKPKDIIQFTAEKLSVGEVSQLVVSPLCGAVSLFVGTTRNNFEGKKVISLEYEAYVPMAENEIRKICNDIRQKWPVRHIAVFHRLGLVPVSEASTVIAVSSAHRAASLEAVSYAIDSLKAKVPIWKKEIYEESTSSWKRNKECFWAAGD.

Over residues 1 to 30 (MSSLEISNSCFSPETRSPSSRQSVEDNASE) the composition is skewed to polar residues. The tract at residues 1 to 41 (MSSLEISNSCFSPETRSPSSRQSVEDNASEPSGKDVDDVQE) is disordered. S20 is subject to Phosphoserine. Residues 32–41 (SGKDVDDVQE) are compositionally biased toward basic and acidic residues. Residues 143-144 (HR), K159, and 166-168 (KKE) each bind substrate.

This sequence belongs to the MoaE family. MOCS2B subfamily. In terms of assembly, heterotetramer; composed of 2 small (MOCS2A) and 2 large (MOCS2B) subunits.

The protein resides in the cytoplasm. It localises to the cytosol. The catalysed reaction is 2 [molybdopterin-synthase sulfur-carrier protein]-C-terminal-Gly-aminoethanethioate + cyclic pyranopterin phosphate + H2O = molybdopterin + 2 [molybdopterin-synthase sulfur-carrier protein]-C-terminal Gly-Gly + 2 H(+). The protein operates within cofactor biosynthesis; molybdopterin biosynthesis. Catalytic subunit of the molybdopterin synthase complex, a complex that catalyzes the conversion of precursor Z into molybdopterin. Acts by mediating the incorporation of 2 sulfur atoms from thiocarboxylated MOCS2A into precursor Z to generate a dithiolene group. This is Molybdopterin synthase catalytic subunit from Mus musculus (Mouse).